Here is a 335-residue protein sequence, read N- to C-terminus: Pregnancy-specific beta-1-glycoprotein 5 (335 aa).

The first 34 residues, Met1 to Ala34, serve as a signal peptide directing secretion. Residues Gln35–Leu144 form the Ig-like V-type domain. N-linked (GlcNAc...) asparagine glycans are attached at residues Asn104 and Asn111. The Cell attachment site signature appears at Arg127–Asp129. 2 consecutive Ig-like C2-type domains span residues Pro147–Asn234 and Pro239–Thr317. 2 cysteine pairs are disulfide-bonded: Cys169–Cys217 and Cys261–Cys301. N-linked (GlcNAc...) asparagine glycosylation is found at Asn175 and Asn210.

It belongs to the immunoglobulin superfamily. CEA family. In terms of tissue distribution, synthesized by syncytiotrophoblast of the placenta.

It localises to the secreted. This Homo sapiens (Human) protein is Pregnancy-specific beta-1-glycoprotein 5 (PSG5).